Here is a 396-residue protein sequence, read N- to C-terminus: Chaperone protein DnaJ (396 aa).

The region spanning 6–71 is the J domain; it reads DYYEVLEVTK…DKRSRYDQFG (66 aa). The CR-type zinc-finger motif lies at 154–236; the sequence is GVEKKFKLKK…CGGDGIVYGE (83 aa). Zn(2+)-binding residues include Cys167, Cys170, Cys184, Cys187, Cys210, Cys213, Cys224, and Cys227. 4 CXXCXGXG motif repeats span residues 167–174, 184–191, 210–217, and 224–231; these read CNHCHGTG, CPTCKGSG, CPTCNGEG, and CKECGGDG.

The protein belongs to the DnaJ family. In terms of assembly, homodimer. It depends on Zn(2+) as a cofactor.

It localises to the cytoplasm. Functionally, participates actively in the response to hyperosmotic and heat shock by preventing the aggregation of stress-denatured proteins and by disaggregating proteins, also in an autonomous, DnaK-independent fashion. Unfolded proteins bind initially to DnaJ; upon interaction with the DnaJ-bound protein, DnaK hydrolyzes its bound ATP, resulting in the formation of a stable complex. GrpE releases ADP from DnaK; ATP binding to DnaK triggers the release of the substrate protein, thus completing the reaction cycle. Several rounds of ATP-dependent interactions between DnaJ, DnaK and GrpE are required for fully efficient folding. Also involved, together with DnaK and GrpE, in the DNA replication of plasmids through activation of initiation proteins. The chain is Chaperone protein DnaJ from Bacteroides thetaiotaomicron (strain ATCC 29148 / DSM 2079 / JCM 5827 / CCUG 10774 / NCTC 10582 / VPI-5482 / E50).